The primary structure comprises 596 residues: NADH-quinone oxidoreductase subunit C/D (596 aa).

Positions 1 to 186 (MMNDNKYIHI…PAFTLTRKKE (186 aa)) are NADH dehydrogenase I subunit C. Residues 210 to 596 (DFMFLNLGPN…IDFVMSDVDR (387 aa)) form an NADH dehydrogenase I subunit D region.

This sequence in the N-terminal section; belongs to the complex I 30 kDa subunit family. The protein in the C-terminal section; belongs to the complex I 49 kDa subunit family. NDH-1 is composed of 13 different subunits. Subunits NuoB, CD, E, F, and G constitute the peripheral sector of the complex.

It is found in the cell inner membrane. The enzyme catalyses a quinone + NADH + 5 H(+)(in) = a quinol + NAD(+) + 4 H(+)(out). NDH-1 shuttles electrons from NADH, via FMN and iron-sulfur (Fe-S) centers, to quinones in the respiratory chain. The immediate electron acceptor for the enzyme in this species is believed to be ubiquinone. Couples the redox reaction to proton translocation (for every two electrons transferred, four hydrogen ions are translocated across the cytoplasmic membrane), and thus conserves the redox energy in a proton gradient. The chain is NADH-quinone oxidoreductase subunit C/D from Blochmanniella floridana.